The chain runs to 436 residues: Enolase (436 aa).

Gln-163 provides a ligand contact to (2R)-2-phosphoglycerate. Glu-205 functions as the Proton donor in the catalytic mechanism. Mg(2+) is bound by residues Asp-242, Glu-285, and Asp-312. (2R)-2-phosphoglycerate is bound by residues Lys-337, Arg-366, Ser-367, and Lys-388. Lys-337 (proton acceptor) is an active-site residue.

Belongs to the enolase family. Requires Mg(2+) as cofactor.

The protein localises to the cytoplasm. It localises to the secreted. The protein resides in the cell surface. The catalysed reaction is (2R)-2-phosphoglycerate = phosphoenolpyruvate + H2O. The protein operates within carbohydrate degradation; glycolysis; pyruvate from D-glyceraldehyde 3-phosphate: step 4/5. Its function is as follows. Catalyzes the reversible conversion of 2-phosphoglycerate (2-PG) into phosphoenolpyruvate (PEP). It is essential for the degradation of carbohydrates via glycolysis. The protein is Enolase of Solidesulfovibrio magneticus (strain ATCC 700980 / DSM 13731 / RS-1) (Desulfovibrio magneticus).